Consider the following 498-residue polypeptide: Cytochrome P450 71B31 (498 aa).

The chain crosses the membrane as a helical span at residues 3-23; it reads MFLGLLFLFPLFFILFKNLLP. C441 lines the heme pocket.

This sequence belongs to the cytochrome P450 family. Heme is required as a cofactor.

Its subcellular location is the membrane. The polypeptide is Cytochrome P450 71B31 (CYP71B31) (Arabidopsis thaliana (Mouse-ear cress)).